A 922-amino-acid chain; its full sequence is Isoleucine--tRNA ligase (922 aa).

Positions P57–H67 match the 'HIGH' region motif. E553 lines the L-isoleucyl-5'-AMP pocket. A 'KMSKS' region motif is present at residues K594 to S598. ATP is bound at residue K597. Residues C892, C895, C912, and C915 each contribute to the Zn(2+) site.

This sequence belongs to the class-I aminoacyl-tRNA synthetase family. IleS type 1 subfamily. Monomer. It depends on Zn(2+) as a cofactor.

Its subcellular location is the cytoplasm. The catalysed reaction is tRNA(Ile) + L-isoleucine + ATP = L-isoleucyl-tRNA(Ile) + AMP + diphosphate. Its function is as follows. Catalyzes the attachment of isoleucine to tRNA(Ile). As IleRS can inadvertently accommodate and process structurally similar amino acids such as valine, to avoid such errors it has two additional distinct tRNA(Ile)-dependent editing activities. One activity is designated as 'pretransfer' editing and involves the hydrolysis of activated Val-AMP. The other activity is designated 'posttransfer' editing and involves deacylation of mischarged Val-tRNA(Ile). This chain is Isoleucine--tRNA ligase, found in Desulfitobacterium hafniense (strain Y51).